The chain runs to 881 residues: Valine--tRNA ligase (881 aa).

A 'HIGH' region motif is present at residues 48–58; it reads PNITGKLHLGH. The 'KMSKS' region signature appears at 527–531; it reads KMSKS. An ATP-binding site is contributed by K530. 2 coiled-coil regions span residues 721 to 747 and 811 to 881; these read KNET…AEMN and LLDL…AALK.

It belongs to the class-I aminoacyl-tRNA synthetase family. ValS type 1 subfamily. Monomer.

The protein localises to the cytoplasm. It carries out the reaction tRNA(Val) + L-valine + ATP = L-valyl-tRNA(Val) + AMP + diphosphate. Functionally, catalyzes the attachment of valine to tRNA(Val). As ValRS can inadvertently accommodate and process structurally similar amino acids such as threonine, to avoid such errors, it has a 'posttransfer' editing activity that hydrolyzes mischarged Thr-tRNA(Val) in a tRNA-dependent manner. The chain is Valine--tRNA ligase from Clostridium acetobutylicum (strain ATCC 824 / DSM 792 / JCM 1419 / IAM 19013 / LMG 5710 / NBRC 13948 / NRRL B-527 / VKM B-1787 / 2291 / W).